An 860-amino-acid chain; its full sequence is Leucine--tRNA ligase (860 aa).

The short motif at 42 to 52 (PYPSGRLHMGH) is the 'HIGH' region element. Positions 619–623 (KMSKS) match the 'KMSKS' region motif. Lysine 622 contacts ATP.

Belongs to the class-I aminoacyl-tRNA synthetase family.

It is found in the cytoplasm. It carries out the reaction tRNA(Leu) + L-leucine + ATP = L-leucyl-tRNA(Leu) + AMP + diphosphate. The sequence is that of Leucine--tRNA ligase from Shigella sonnei (strain Ss046).